The sequence spans 436 residues: ATP-dependent RNA helicase RhlB (436 aa).

A Q motif motif is present at residues 9–37; it reads QKFADFPLHKEVHQALNEAGFEFCTPIQA. Residues 40–219 form the Helicase ATP-binding domain; sequence LPILLEKKDI…YDHMNEPEKV (180 aa). 53-60 serves as a coordination point for ATP; sequence AQTGTGKT. The DEAD box motif lies at 165 to 168; sequence DEAD. Positions 243–390 constitute a Helicase C-terminal domain; the sequence is KMPLLLSLLE…VTSYDSDALL (148 aa). Residues 392 to 436 form a disordered region; the sequence is DIPPPVRIHRKPSTHTRNTRDRGASRPQGGQRSGPRRHDRTRRHS. Residues 425–436 are compositionally biased toward basic residues; it reads GPRRHDRTRRHS.

This sequence belongs to the DEAD box helicase family. RhlB subfamily. As to quaternary structure, component of the RNA degradosome, which is a multiprotein complex involved in RNA processing and mRNA degradation.

Its subcellular location is the cytoplasm. It catalyses the reaction ATP + H2O = ADP + phosphate + H(+). Functionally, DEAD-box RNA helicase involved in RNA degradation. Has RNA-dependent ATPase activity and unwinds double-stranded RNA. The sequence is that of ATP-dependent RNA helicase RhlB from Shewanella halifaxensis (strain HAW-EB4).